The chain runs to 101 residues: Large ribosomal subunit protein bL21 (101 aa).

The protein belongs to the bacterial ribosomal protein bL21 family. In terms of assembly, part of the 50S ribosomal subunit. Contacts protein L20.

In terms of biological role, this protein binds to 23S rRNA in the presence of protein L20. In Corynebacterium diphtheriae (strain ATCC 700971 / NCTC 13129 / Biotype gravis), this protein is Large ribosomal subunit protein bL21.